A 245-amino-acid chain; its full sequence is 2,3-bisphosphoglycerate-dependent phosphoglycerate mutase (245 aa).

Substrate-binding positions include 8–15 (RHGQSLWN), 21–22 (TG), Arg60, 87–90 (ERHY), Lys98, 114–115 (RR), and 183–184 (GN). Residue His9 is the Tele-phosphohistidine intermediate of the active site. Catalysis depends on Glu87, which acts as the Proton donor/acceptor.

It belongs to the phosphoglycerate mutase family. BPG-dependent PGAM subfamily.

The enzyme catalyses (2R)-2-phosphoglycerate = (2R)-3-phosphoglycerate. It participates in carbohydrate degradation; glycolysis; pyruvate from D-glyceraldehyde 3-phosphate: step 3/5. Catalyzes the interconversion of 2-phosphoglycerate and 3-phosphoglycerate. The chain is 2,3-bisphosphoglycerate-dependent phosphoglycerate mutase from Bacillus mycoides (strain KBAB4) (Bacillus weihenstephanensis).